Consider the following 251-residue polypeptide: 7-cyano-7-deazaguanine synthase (251 aa).

The segment at 1–21 is disordered; sequence MSDLPRHSPRRQHAGESAVTA. 35–45 is an ATP binding site; it reads YSGGMDSYTVL. Positions 212, 220, 223, and 226 each coordinate Zn(2+).

Belongs to the QueC family. It depends on Zn(2+) as a cofactor.

It carries out the reaction 7-carboxy-7-deazaguanine + NH4(+) + ATP = 7-cyano-7-deazaguanine + ADP + phosphate + H2O + H(+). Its pathway is purine metabolism; 7-cyano-7-deazaguanine biosynthesis. Its function is as follows. Catalyzes the ATP-dependent conversion of 7-carboxy-7-deazaguanine (CDG) to 7-cyano-7-deazaguanine (preQ(0)). The sequence is that of 7-cyano-7-deazaguanine synthase from Chromohalobacter salexigens (strain ATCC BAA-138 / DSM 3043 / CIP 106854 / NCIMB 13768 / 1H11).